The chain runs to 190 residues: Elongation factor P-like protein (190 aa).

This sequence belongs to the elongation factor P family.

In Escherichia fergusonii (strain ATCC 35469 / DSM 13698 / CCUG 18766 / IAM 14443 / JCM 21226 / LMG 7866 / NBRC 102419 / NCTC 12128 / CDC 0568-73), this protein is Elongation factor P-like protein.